A 352-amino-acid polypeptide reads, in one-letter code: Chorismate synthase (352 aa).

NADP(+)-binding residues include Arg-48 and Arg-54. Residues 125–127 (RSS), 238–239 (NA), Gly-278, 293–297 (KPTSS), and Arg-319 each bind FMN.

It belongs to the chorismate synthase family. In terms of assembly, homotetramer. Requires FMNH2 as cofactor.

It carries out the reaction 5-O-(1-carboxyvinyl)-3-phosphoshikimate = chorismate + phosphate. It participates in metabolic intermediate biosynthesis; chorismate biosynthesis; chorismate from D-erythrose 4-phosphate and phosphoenolpyruvate: step 7/7. Catalyzes the anti-1,4-elimination of the C-3 phosphate and the C-6 proR hydrogen from 5-enolpyruvylshikimate-3-phosphate (EPSP) to yield chorismate, which is the branch point compound that serves as the starting substrate for the three terminal pathways of aromatic amino acid biosynthesis. This reaction introduces a second double bond into the aromatic ring system. The chain is Chorismate synthase from Bordetella avium (strain 197N).